A 1124-amino-acid polypeptide reads, in one-letter code: SH3 and PX domain-containing protein 2A (1124 aa).

The PX domain maps to 4-128 (YCVQDATVVD…RFFEARPEDV (125 aa)). Residues 166 to 225 (MILEQYVVVSNYKKQENSELSLQAGEVVDVIEKNESGWWFVSTSEEQGWVPATYLEAQNG) form the SH3 1 domain. A Phosphothreonine modification is found at threonine 256. The SH3 2 domain occupies 266–325 (SREEKYVTVQPYTSQSKDEIGFEKGVTVEVIRKNLEGWWYIRYLGKEGWAPASYLKKAKD). Residues serine 405 and serine 420 each carry the phosphoserine modification. Disordered stretches follow at residues 414–443 (QRAQ…PKPP), 504–672 (RKKP…KLKA), 692–830 (SVTI…PKKE), and 886–952 (YLVA…GKTS). Residues 447 to 506 (SVEVEYYTIAEFQSCISDGISFRGGQKAEVIDKNSGGWWYVQIGEKEGWAPASYIDKRKK) form the SH3 3 domain. Residues serine 546 and serine 566 each carry the phosphoserine modification. Residues 575-585 (SGDRGSGDKHP) show a composition bias toward basic and acidic residues. Phosphoserine is present on serine 592. A compositionally biased stretch (acidic residues) spans 607–619 (SSEDVALEEETIY). Low complexity-rich tracts occupy residues 633–669 (SARG…SLLK) and 692–709 (SVTI…SSLS). Serine 643 is subject to Phosphoserine. A compositionally biased stretch (basic and acidic residues) spans 713-739 (GDLKPRSASDAGIRDTPKVGTKKDPDV). Residue threonine 728 is modified to Phosphothreonine. Residues serine 764, serine 766, and serine 812 each carry the phosphoserine modification. Phosphothreonine is present on threonine 822. An SH3 4 domain is found at 833 to 892 (GQGATYVTCSAYQKVQDSEISFPEGAEVHVLEKAESGWWYVRFGELEGWAPSHYLVAEEN). A coiled-coil region spans residues 907–937 (SSQNEGKSDSLEKIEKRVQALNTVNQSKRAT). The span at 912–924 (GKSDSLEKIEKRV) shows a compositional bias: basic and acidic residues. A compositionally biased stretch (polar residues) spans 926–935 (ALNTVNQSKR). A phosphoserine mark is found at serine 993, serine 1007, serine 1008, and serine 1029. Residues 1020-1050 (KGRLAERAASQGSESPLLPTQRKGIPVSPVR) are disordered. The region spanning 1063 to 1124 (NLKDVYISIA…VPSNYLEKKN (62 aa)) is the SH3 5 domain.

The protein belongs to the SH3PXD2 family. As to quaternary structure, interacts with ADAM12, ADAM15 and ADAM19. Interacts with NOXO1. Interacts (via SH3 domains) with NOXA1; the interaction is direct. Interacts (via N-terminus) with CYBA. Interacts with FASLG. Interacts (via PX domain) with RAB40B (GTP-bound); interaction promotes invadopodia-mediated extracellular matrix degradation. Post-translationally, tyrosine phosphorylated by SRC. Phosphorylation plays a regulatory role in the protein localization. The intramolecular interaction of the PX domain with the third SH3 domain maintains the protein in the cytoplasm and phosphorylation disrupts this interaction, resulting in the redistribution of the protein from cytoplasm to the perimembrane region. Phosphorylated on serine upon DNA damage, probably by ATM or ATR. Widely expressed. Not found in the spleen and testis.

It is found in the cytoplasm. Its subcellular location is the cell projection. It localises to the podosome. Adapter protein involved in invadopodia and podosome formation, extracellular matrix degradation and invasiveness of some cancer cells. Binds matrix metalloproteinases (ADAMs), NADPH oxidases (NOXs) and phosphoinositides. Acts as an organizer protein that allows NOX1- or NOX3-dependent reactive oxygen species (ROS) generation and ROS localization. In association with ADAM12, mediates the neurotoxic effect of amyloid-beta peptide. This is SH3 and PX domain-containing protein 2A from Mus musculus (Mouse).